The chain runs to 64 residues: Large ribosomal subunit protein bL35 (64 aa).

Positions 1-55 (MPKMKTNKSVSARFKLTASGQLKRTRPGKRHKLSKKSSQEKRNLSKQPLVDKGQV) are disordered. Positions 23 to 35 (KRTRPGKRHKLSK) are enriched in basic residues.

Belongs to the bacterial ribosomal protein bL35 family.

The protein is Large ribosomal subunit protein bL35 of Chlamydia pneumoniae (Chlamydophila pneumoniae).